A 542-amino-acid polypeptide reads, in one-letter code: Chaperonin GroEL 1 (542 aa).

Residues 30–33 (TLGP), K51, 87–91 (DGTTT), G415, 480–482 (NAA), and D496 contribute to the ATP site.

This sequence belongs to the chaperonin (HSP60) family. In terms of assembly, forms a cylinder of 14 subunits composed of two heptameric rings stacked back-to-back. Interacts with the co-chaperonin GroES.

It localises to the cytoplasm. The enzyme catalyses ATP + H2O + a folded polypeptide = ADP + phosphate + an unfolded polypeptide.. Functionally, together with its co-chaperonin GroES, plays an essential role in assisting protein folding. The GroEL-GroES system forms a nano-cage that allows encapsulation of the non-native substrate proteins and provides a physical environment optimized to promote and accelerate protein folding. The chain is Chaperonin GroEL 1 from Nitrobacter winogradskyi (strain ATCC 25391 / DSM 10237 / CIP 104748 / NCIMB 11846 / Nb-255).